Reading from the N-terminus, the 1435-residue chain is Sterol 3-beta-glucosyltransferase (1435 aa).

4 disordered regions span residues 1 to 26, 75 to 107, 123 to 169, and 185 to 206; these read MAPDDESKKRATRKSTKRWKEEHQVA, SDEEYDLGKPTRQSSESHINRSSIDQKMGKFEG, RFSS…KDTP, and PSFEMPRKSKDPAEVDDERTSP. The span at 85-99 shows a compositional bias: polar residues; that stretch reads TRQSSESHINRSSID. Residues 123-133 are compositionally biased toward low complexity; that stretch reads RFSSRSKSKSS. The span at 134–143 shows a compositional bias: polar residues; sequence NTIARGSRTP. The span at 189 to 206 shows a compositional bias: basic and acidic residues; sequence MPRKSKDPAEVDDERTSP. Positions 211 to 258 constitute a GRAM 1 domain; it reads ERLMEIFKFETPEDVLEEYPCWLMKSVLLQGYMYITTKHICFYAYLPK. In terms of domain architecture, PH spans 262-360; it reads EVVKSGYLSK…WVKALQKIIF (99 aa). 4 disordered regions span residues 444–477, 527–594, 610–671, and 727–759; these read LSTADDSRGSSKRTSFQVSRDRKLHGPSVQPNAP, DLNR…QASA, QHSP…QAEI, and GKKHYEEPHGIPRDNEMPSIGDDDDNRDGATPA. The span at 527-537 shows a compositional bias: basic and acidic residues; sequence DLNRLTTEHHR. Composition is skewed to polar residues over residues 539–554, 628–647, and 657–671; these read NSANSISTRRSLSTNR, KSRSLTSPIKSADVSPTRTQ, and TTGSVSDSNVGQAEI. Positions 729–742 are enriched in basic and acidic residues; sequence KHYEEPHGIPRDNE. One can recognise a GRAM 2 domain in the interval 760–826; that stretch reads DRFRDHFALP…KDIENVDKEK (67 aa). Residues Ser949, Arg950, Asp952, Ala1252, His1254, His1267, Gly1271, Thr1272, Asp1291, and Gln1292 each contribute to the UDP-alpha-D-glucose site.

It belongs to the glycosyltransferase 28 family.

Its subcellular location is the cytoplasm. It is found in the preautophagosomal structure membrane. It catalyses the reaction a sterol + UDP-alpha-D-glucose = a sterol 3-beta-D-glucoside + UDP + H(+). The enzyme catalyses ergosterol + UDP-alpha-D-glucose = ergosteryl 3-beta-D-glucoside + UDP + H(+). Its function is as follows. Sterol glycosyltransferase responsible for the glycosylation of ergosterol to form ergosterol-glucoside. The polypeptide is Sterol 3-beta-glucosyltransferase (Sclerotinia sclerotiorum (strain ATCC 18683 / 1980 / Ss-1) (White mold)).